Reading from the N-terminus, the 140-residue chain is ATP synthase epsilon chain (140 aa).

This sequence belongs to the ATPase epsilon chain family. In terms of assembly, F-type ATPases have 2 components, CF(1) - the catalytic core - and CF(0) - the membrane proton channel. CF(1) has five subunits: alpha(3), beta(3), gamma(1), delta(1), epsilon(1). CF(0) has three main subunits: a, b and c.

It localises to the cell inner membrane. Functionally, produces ATP from ADP in the presence of a proton gradient across the membrane. This chain is ATP synthase epsilon chain, found in Bdellovibrio bacteriovorus (strain ATCC 15356 / DSM 50701 / NCIMB 9529 / HD100).